Consider the following 449-residue polypeptide: Phosphoglucosamine mutase (449 aa).

Serine 100 (phosphoserine intermediate) is an active-site residue. Positions 100, 241, 243, and 245 each coordinate Mg(2+). Serine 100 bears the Phosphoserine mark.

It belongs to the phosphohexose mutase family. It depends on Mg(2+) as a cofactor. In terms of processing, activated by phosphorylation.

It catalyses the reaction alpha-D-glucosamine 1-phosphate = D-glucosamine 6-phosphate. Catalyzes the conversion of glucosamine-6-phosphate to glucosamine-1-phosphate. This is Phosphoglucosamine mutase from Clostridium kluyveri (strain NBRC 12016).